Consider the following 843-residue polypeptide: Glycogen phosphorylase, muscle form (843 aa).

At serine 2 the chain carries N-acetylserine. Serine 15 is subject to Phosphoserine; by PHK; in form phosphorylase A. Aspartate 43 and tyrosine 76 together coordinate AMP. Residues tyrosine 204 and tyrosine 227 each carry the phosphotyrosine modification. 310-319 (RRFKSSKFGC) is a binding site for AMP. Serine 430 is modified (phosphoserine). Tyrosine 473 is subject to Phosphotyrosine. At serine 514 the chain carries Phosphoserine. Residue lysine 681 is modified to N6-(pyridoxal phosphate)lysine. Phosphoserine occurs at positions 747 and 748.

It belongs to the glycogen phosphorylase family. Homodimer. Homotetramer; to form the enzymatically active phosphorylase A. Requires pyridoxal 5'-phosphate as cofactor. Phosphorylation of Ser-15 converts phosphorylase B (unphosphorylated) to phosphorylase A.

The catalysed reaction is [(1-&gt;4)-alpha-D-glucosyl](n) + phosphate = [(1-&gt;4)-alpha-D-glucosyl](n-1) + alpha-D-glucose 1-phosphate. Its activity is regulated as follows. Allosterically regulated through the non-covalent binding of metabolites, being activated by AMP and inhibited by ATP, ADP, and glucose-6-phosphate. The activity is also controlled by post-translational modifications including phosphorylation. Its function is as follows. Allosteric enzyme that catalyzes the rate-limiting step in glycogen catabolism, the phosphorolytic cleavage of glycogen to produce glucose-1-phosphate, and plays a central role in maintaining cellular and organismal glucose homeostasis. The polypeptide is Glycogen phosphorylase, muscle form (Oryctolagus cuniculus (Rabbit)).